Here is a 392-residue protein sequence, read N- to C-terminus: Ribonuclease D (392 aa).

Residues 12-178 (LIETTEALAA…PVYEGLRARL (167 aa)) form the 3'-5' exonuclease domain. Residues 217–298 (NRRQLALVKA…ASTKAIPDAE (82 aa)) enclose the HRDC domain.

Belongs to the RNase D family. A divalent metal cation is required as a cofactor.

It localises to the cytoplasm. The catalysed reaction is Exonucleolytic cleavage that removes extra residues from the 3'-terminus of tRNA to produce 5'-mononucleotides.. Functionally, exonuclease involved in the 3' processing of various precursor tRNAs. Initiates hydrolysis at the 3'-terminus of an RNA molecule and releases 5'-mononucleotides. The polypeptide is Ribonuclease D (Acidiphilium cryptum (strain JF-5)).